An 856-amino-acid polypeptide reads, in one-letter code: MTLSAQQLQQHTPMMQQFLTIKSEVPDTLLFYRMGDFYELFFDDARKASQLLGISLTQRGKTGGNAIPMAGVPYHSVEGYLAKLIAMGESIAICEQIGDPATSKGPVERKLVRIITPGTVTDEALLNDRQDNLLCSVYQLQNSFGIASLDLGSGRFIINQFQHTETLQAELQRLNPAELLYPENFEHMDLIEHLQTIRRRPEWEFELATSKKILNQQFSTKDLIGFGVEKAEVALCAAGALLQYIKDTQRTSLPHLQSIQLEKNIDSVILDAATRKNLELTQNLSGGFDNTLAEVLDFTVTPMGSRLLKRWIHQPIRNFNTLTYRQTMIQTLIEQDLSSALADPLKQIGDVERVIARLALRSARPRDLTRLRTAFSLLPELQHLIADLPTELVGKLNKEMGLYPELLTLLEKAVIDNPPVIIRDGGVIKEGYNEELDQWRNLAKGATDYLEQLETRERQATGISTLKVGYNRVHGYYIETSRSQSDIVPAHYIRRQTLKNTERYIIAELKEHEDKVLSSRGKALALEKKLYEQLIDLLLPHLQNLQSTAQALAELDVLNNLAERAVTLNYVRPTLQAENGIEIEEGRHPVVEQVSKTPFIANPVMLNDKRRMLIITGPNMGGKSTYMRQVALMVLMAHIGSFIPAQQAKIGPVDRIFTRIGASDDLASGRSTFMVEMTETANILHNATKNSLVLMDEIGRGTSTFDGLSLAWACAEQLAKKIQAYTLFATHYFELTKLPENIPELVNVHLDAVEHGDAIAFLHAVQEGAANKSYGLQVAALAGVPKEVVSNAKNILRQLELGSQPQANLNEKPLQTTLAFDDAQTNQALLLLANINPDELTPKKALELIYLLKERA.

617-624 is a binding site for ATP; it reads GPNMGGKS.

This sequence belongs to the DNA mismatch repair MutS family.

Functionally, this protein is involved in the repair of mismatches in DNA. It is possible that it carries out the mismatch recognition step. This protein has a weak ATPase activity. In Psychromonas ingrahamii (strain DSM 17664 / CCUG 51855 / 37), this protein is DNA mismatch repair protein MutS.